A 369-amino-acid chain; its full sequence is MSGPNTNYDPVQVSALDADQVEARVAEALEAIARASTTAELKQVRITHTGDRSALALANREIGALPPAARKDAGKRIGQARGRVNQALKARQQELAEAELEARLAAETTDVTLPVVTSPQGAPHPITALIDNVCDVFTAMGWEVAEGPEAESEWFNFDALNLGTDHPARALQDTLWLDPVDDGKCMRTATSPVQIHTLLKQQPPVRIISPGKVFRADEYDATHLPVFHQVEGLCVDKGITMGHLKGTVDAFARAMFGAVRTRFRPHYFPFTEPSAEVDLECFVCHGASVGNPDRPCRTCRSEGWIEWGGCGVVNPRVLIACGIDTDVYSGFAFGMGIDRTVMFRNNAPDLRDFVEGDVRFSRSLRGGAR.

A Mg(2+)-binding site is contributed by Glu-272.

This sequence belongs to the class-II aminoacyl-tRNA synthetase family. Phe-tRNA synthetase alpha subunit type 1 subfamily. As to quaternary structure, tetramer of two alpha and two beta subunits. Mg(2+) serves as cofactor.

Its subcellular location is the cytoplasm. It catalyses the reaction tRNA(Phe) + L-phenylalanine + ATP = L-phenylalanyl-tRNA(Phe) + AMP + diphosphate + H(+). The sequence is that of Phenylalanine--tRNA ligase alpha subunit from Cutibacterium acnes (strain DSM 16379 / KPA171202) (Propionibacterium acnes).